The primary structure comprises 283 residues: Glutamate racemase (283 aa).

Residues 13-14 (DS) and 45-46 (YG) each bind substrate. Cys-76 serves as the catalytic Proton donor/acceptor. 77–78 (NT) contributes to the substrate binding site. The active-site Proton donor/acceptor is Cys-186. Position 187 to 188 (187 to 188 (TH)) interacts with substrate.

It belongs to the aspartate/glutamate racemases family.

The enzyme catalyses L-glutamate = D-glutamate. The protein operates within cell wall biogenesis; peptidoglycan biosynthesis. Its function is as follows. Provides the (R)-glutamate required for cell wall biosynthesis. The chain is Glutamate racemase from Microcystis aeruginosa (strain NIES-843 / IAM M-2473).